The chain runs to 131 residues: Protein SOB FIVE-LIKE 4 (131 aa).

Disordered regions lie at residues 1–21 (MDKE…SSPI) and 40–131 (IYNY…YRMK). Residues 8–18 (SSESGWTTYLS) are compositionally biased toward polar residues. The short motif at 11 to 16 (SGWTTY) is the SOFL-A element. Positions 46–58 (KVEHEEERNKDSD) are enriched in basic and acidic residues. Positions 60-69 (SMASDASSGP) match the SOFL-B motif. A compositionally biased stretch (basic and acidic residues) spans 79–109 (KALDLKNGKNEGNSKSKNDDDHHNHYHDGKK). The Nuclear localization signal motif lies at 107–114 (GKKTSNSY). Basic residues predominate over residues 114–131 (YRKKDKKKRENKSTYRMK).

Belongs to the SOFL plant protein family. In terms of tissue distribution, expressed, at low levels, in seedlings, roots, flowers and siliques.

It localises to the cytoplasm. Its subcellular location is the nucleus. Involved in cytokinin-mediated development. This is Protein SOB FIVE-LIKE 4 from Arabidopsis thaliana (Mouse-ear cress).